The sequence spans 364 residues: DNA replication and repair protein RecF (364 aa).

30–37 (GNNGQGKT) contacts ATP.

Belongs to the RecF family.

The protein resides in the cytoplasm. In terms of biological role, the RecF protein is involved in DNA metabolism; it is required for DNA replication and normal SOS inducibility. RecF binds preferentially to single-stranded, linear DNA. It also seems to bind ATP. The sequence is that of DNA replication and repair protein RecF from Citrifermentans bemidjiense (strain ATCC BAA-1014 / DSM 16622 / JCM 12645 / Bem) (Geobacter bemidjiensis).